Consider the following 323-residue polypeptide: Pantothenate kinase (323 aa).

101–108 is an ATP binding site; sequence GSVAVGKS.

It belongs to the prokaryotic pantothenate kinase family.

Its subcellular location is the cytoplasm. It catalyses the reaction (R)-pantothenate + ATP = (R)-4'-phosphopantothenate + ADP + H(+). The protein operates within cofactor biosynthesis; coenzyme A biosynthesis; CoA from (R)-pantothenate: step 1/5. This is Pantothenate kinase from Xanthobacter autotrophicus (strain ATCC BAA-1158 / Py2).